Here is a 591-residue protein sequence, read N- to C-terminus: Serine/threonine-protein phosphatase PP2A 65 kDa regulatory subunit (591 aa).

N-acetylalanine is present on A2. 15 HEAT repeats span residues 10-48 (DSLYPIAVLIDELKNEDVQLRLNSIKKLSTIALALGEER), 49-86 (TRSELIPFLTETIYDEDEVLLALADQLGNFTSLVGGPE), 87-125 (FAMYLIPPLESLATVEETVVRDKAVESLRTVAAEHSAQD), 126-163 (LEIHVVPTLQRLVSGDWFTSRTSACGLFSVCYPRVTQP), 164-202 (VKAELRANFRKLCQDETPMVRRAAANKLGEFAKVVETEY), 203-241 (LKSDLIPNFVQLAQDDQDSVRLLAVEACVSIAQLLPQDD), 242-280 (VEHLVLPTLRQCASDSSWRVRYMVAEKFVDLQKAVGPEI), 281-323 (TRVD…QVQI), 324-362 (ILSSILPYVRDLVSDPNPHVKSALASVIMGLSPMLGAYQ), 363-401 (TVEQLLPLFLIQLKDECPEVRLNIISNLDCVNDVIGIQQ), 402-440 (LSQSLLPAIVELAEDSKWRVRLAIIEYMPALAGQLGQEF), 441-479 (FDQKLRGLCMGWLNDHVYAIREAATLNMKKLVEQFGAPW), 480-518 (AEQAIIPMILVMSRNKNYLHRMTCLFCLNVLAEVCGTDI), 519-557 (TTKLLLPTVLLLAADPVANVRFNVAKTLQKISPFLEASV), and 558-591 (IDAQVKPTLDKLNTDTDVDVKHFAAQAIAGIAAA).

This sequence belongs to the phosphatase 2A regulatory subunit A family. PP2A exists in several trimeric forms, all of which consist of a core composed of a catalytic subunit associated with a 65 kDa regulatory subunit (PR65) (subunit A). The core complex associates with a third, variable subunit (subunit B), which confers distinct properties to the holoenzyme. Interacts with the inorganic phosphate transporter PXo (CG10483). Component of the Integrator-PP2A (INTAC) complex, composed of the Integrator core complex and protein phosphatase 2A subunits mts/PP2A and Pp2A-29B. Expression varies in tissues throughout development. Highly distributed expression in early embryos. In late embryonal development, found at high levels in nervous system and gonads. In third instar larvae, found in brain, imaginal disks and salivary glands.

Its subcellular location is the nucleus. Functionally, the PR65 subunit of protein phosphatase 2A serves as a scaffolding molecule to coordinate the assembly of the catalytic subunit and a variable regulatory B subunit. Key mediator of a quality checkpoint during transcription elongation as part of the Integrator-PP2A (INTAC) complex. The INTAC complex drives premature transcription termination of transcripts that are unfavorably configured for transcriptional elongation: within the INTAC complex, acts as a scaffolding subunit for mts/PP2A, which catalyzes dephosphorylation of the C-terminal domain (CTD) of Pol II subunit POLR2A/RPB1 and Spt5, thereby preventing transcriptional elongation. This is Serine/threonine-protein phosphatase PP2A 65 kDa regulatory subunit (Pp2A-29B) from Drosophila melanogaster (Fruit fly).